Here is a 190-residue protein sequence, read N- to C-terminus: Elongation factor P-like protein (190 aa).

Belongs to the elongation factor P family.

This Edwardsiella ictaluri (strain 93-146) protein is Elongation factor P-like protein.